A 244-amino-acid polypeptide reads, in one-letter code: rRNA adenine N-6-methyltransferase (244 aa).

Asparagine 11, isoleucine 13, glycine 38, glutamate 59, aspartate 84, and asparagine 101 together coordinate S-adenosyl-L-methionine.

Belongs to the class I-like SAM-binding methyltransferase superfamily. rRNA adenine N(6)-methyltransferase family.

The catalysed reaction is adenosine(2085) in 23S rRNA + 2 S-adenosyl-L-methionine = N(6)-dimethyladenosine(2085) in 23S rRNA + 2 S-adenosyl-L-homocysteine + 2 H(+). This protein produces a dimethylation of the adenine residue at position 2085 in 23S rRNA, resulting in reduced affinity between ribosomes and macrolide-lincosamide-streptogramin B antibiotics. This Staphylococcus aureus protein is rRNA adenine N-6-methyltransferase (ermC).